The chain runs to 312 residues: UPF0725 protein At3g19520 (312 aa).

This sequence belongs to the UPF0725 (EMB2204) family.

In Arabidopsis thaliana (Mouse-ear cress), this protein is UPF0725 protein At3g19520.